Here is a 72-residue protein sequence, read N- to C-terminus: Delta-actitoxin-Avd2b 1 (72 aa).

The first 21 residues, 1–21 (MMNRLLVFLMLGAAFMLVVSA), serve as a signal peptide directing secretion. Residues 22–42 (NDAYGDEPAFKDLNQGDESLG) constitute a propeptide that is removed on maturation. 3 disulfides stabilise this stretch: cysteine 47–cysteine 62, cysteine 48–cysteine 56, and cysteine 50–cysteine 67.

It belongs to the sea anemone short toxin (type III) family.

The protein localises to the secreted. It localises to the nematocyst. In terms of biological role, voltage-gated sodium channel (Nav) inhibitor. 1 uM completely inhibits insect voltage-gated sodium channel inactivation (DmNav1 from D.melanogaster). This Anemonia viridis (Snakelocks anemone) protein is Delta-actitoxin-Avd2b 1.